The sequence spans 379 residues: MSRNQPPKIAIVAGEHSGDLLGAGLMQAIAKRHPNATFIGVGGPLMAERGMDSFFAMDDLAVMGIAEVFQQLPKLLKHRKNLVNYLISEQPDVMIGIDAPDFNLTVEARLKKAGISTIHYVSPSVWAWREGRIKGIKKAVDHVLCLLPFEKDFYDKHQLPATFVGHPLADDIPMQWQQTEARNELELEPAVMYLAILPGSRKGEIARMAPVFLKVANKLAERYPELRFVAPMISEARAAQFRELVDQYSPELNIVLPVGESRKVMAAANYLLLTSGTVALEALLIKRPMVVAYRFHWLSYQIIKRLFHAPFFSLPNLLAGKEIVPELAQSDASEEAIEQALVQLIEQDNEPLLEQFTNIHQQLQVSASEKAADVVESFL.

This sequence belongs to the LpxB family.

The catalysed reaction is a lipid X + a UDP-2-N,3-O-bis[(3R)-3-hydroxyacyl]-alpha-D-glucosamine = a lipid A disaccharide + UDP + H(+). The protein operates within bacterial outer membrane biogenesis; LPS lipid A biosynthesis. Functionally, condensation of UDP-2,3-diacylglucosamine and 2,3-diacylglucosamine-1-phosphate to form lipid A disaccharide, a precursor of lipid A, a phosphorylated glycolipid that anchors the lipopolysaccharide to the outer membrane of the cell. This chain is Lipid-A-disaccharide synthase, found in Idiomarina loihiensis (strain ATCC BAA-735 / DSM 15497 / L2-TR).